We begin with the raw amino-acid sequence, 29 residues long: Glucagon (29 aa).

S2 carries the phosphoserine modification.

Belongs to the glucagon family.

It localises to the secreted. Its function is as follows. Glucagon plays a key role in glucose metabolism and homeostasis. Regulates blood glucose by increasing gluconeogenesis and decreasing glycolysis. The polypeptide is Glucagon (GCG) (Chinchilla chinchilla (Short-tailed chinchilla)).